The following is a 72-amino-acid chain: Small ribosomal subunit protein bS18c (72 aa).

The protein belongs to the bacterial ribosomal protein bS18 family. Part of the 30S ribosomal subunit.

It is found in the plastid. The protein localises to the chloroplast. The sequence is that of Small ribosomal subunit protein bS18c from Thalassiosira pseudonana (Marine diatom).